Reading from the N-terminus, the 309-residue chain is Probable manganese-dependent inorganic pyrophosphatase (309 aa).

His-9, Asp-13, Asp-15, Asp-75, His-97, and Asp-149 together coordinate Mn(2+).

The protein belongs to the PPase class C family. Requires Mn(2+) as cofactor.

The protein resides in the cytoplasm. It carries out the reaction diphosphate + H2O = 2 phosphate + H(+). This is Probable manganese-dependent inorganic pyrophosphatase from Staphylococcus epidermidis (strain ATCC 12228 / FDA PCI 1200).